A 359-amino-acid polypeptide reads, in one-letter code: Mannonate dehydratase (359 aa).

It belongs to the mannonate dehydratase family. The cofactor is Fe(2+). Mn(2+) is required as a cofactor.

The catalysed reaction is D-mannonate = 2-dehydro-3-deoxy-D-gluconate + H2O. The protein operates within carbohydrate metabolism; pentose and glucuronate interconversion. Its function is as follows. Catalyzes the dehydration of D-mannonate. This chain is Mannonate dehydratase, found in Moorella thermoacetica (strain ATCC 39073 / JCM 9320).